A 1012-amino-acid polypeptide reads, in one-letter code: Multiple C2 domain and transmembrane region protein 10 (1012 aa).

The region spanning 1 to 115 (MTEAKTGTGN…REGESVVQLY (115 aa)) is the C2 1 domain. Positions 141-203 (ENGENVRRVN…SQQNGQGQRM (63 aa)) are disordered. Over residues 148-160 (RVNRSGGSKKSKK) the composition is skewed to basic residues. Composition is skewed to low complexity over residues 161 to 180 (VQNV…QQQQ) and 188 to 202 (RGNQ…QGQR). C2 domains are found at residues 262–376 (SSHK…PQWY), 411–551 (KAGN…SRWF), and 585–710 (YNSD…THSY). Positions 296, 344, 346, and 349 each coordinate Ca(2+). 3 helical membrane-spanning segments follow: residues 810-830 (FFRL…VEVM), 841-861 (VFVL…PCLL), and 952-972 (ATFL…TVPV).

The protein belongs to the MCTP family. It depends on Ca(2+) as a cofactor. As to expression, highly expressed in roots meristems, shoot apical meristems (SAMs) and in incipient leaf primordia. Observed in flowers.

It is found in the endoplasmic reticulum membrane. In terms of biological role, may function as a signaling molecule by regulating the trafficking of other regulators. The protein is Multiple C2 domain and transmembrane region protein 10 of Arabidopsis thaliana (Mouse-ear cress).